A 394-amino-acid chain; its full sequence is Ribulose bisphosphate carboxylase large chain (394 aa).

Lys5 carries the post-translational modification N6,N6,N6-trimethyllysine. Substrate-binding residues include Asn114 and Thr164. The active-site Proton acceptor is the Lys166. Lys168 serves as a coordination point for substrate. The Mg(2+) site is built by Lys192, Asp194, and Glu195. At Lys192 the chain carries N6-carboxylysine. The active-site Proton acceptor is His285. Substrate contacts are provided by Arg286, His318, and Ser370.

The protein belongs to the RuBisCO large chain family. Type I subfamily. As to quaternary structure, heterohexadecamer of 8 large chains and 8 small chains; disulfide-linked. The disulfide link is formed within the large subunit homodimers. Requires Mg(2+) as cofactor. Post-translationally, the disulfide bond which can form in the large chain dimeric partners within the hexadecamer appears to be associated with oxidative stress and protein turnover.

It is found in the plastid. Its subcellular location is the chloroplast. It carries out the reaction 2 (2R)-3-phosphoglycerate + 2 H(+) = D-ribulose 1,5-bisphosphate + CO2 + H2O. The catalysed reaction is D-ribulose 1,5-bisphosphate + O2 = 2-phosphoglycolate + (2R)-3-phosphoglycerate + 2 H(+). In terms of biological role, ruBisCO catalyzes two reactions: the carboxylation of D-ribulose 1,5-bisphosphate, the primary event in carbon dioxide fixation, as well as the oxidative fragmentation of the pentose substrate in the photorespiration process. Both reactions occur simultaneously and in competition at the same active site. In Alisma plantago-aquatica (Common water-plantain), this protein is Ribulose bisphosphate carboxylase large chain (rbcL).